A 146-amino-acid chain; its full sequence is MTIKLHDLRPAPGSKTPRTRVGRGEGSKGKTAGRGTKGTKARKQVPTTFEGGQMPIHMRLPKLKGFRNRFRTEYEIVNVGDIARLFPEGGTVGVDELVAKGAVRKNSLVKVLGDGKLTVKVDVTAHKFSGSAREQITAAGGSVTEL.

The interval 1–54 (MTIKLHDLRPAPGSKTPRTRVGRGEGSKGKTAGRGTKGTKARKQVPTTFEGGQM) is disordered.

It belongs to the universal ribosomal protein uL15 family. In terms of assembly, part of the 50S ribosomal subunit.

In terms of biological role, binds to the 23S rRNA. This Mycobacterium marinum (strain ATCC BAA-535 / M) protein is Large ribosomal subunit protein uL15.